Consider the following 77-residue polypeptide: Small ribosomal subunit protein bS20 (77 aa).

It belongs to the bacterial ribosomal protein bS20 family.

Functionally, binds directly to 16S ribosomal RNA. This is Small ribosomal subunit protein bS20 from Streptococcus uberis (strain ATCC BAA-854 / 0140J).